The following is a 111-amino-acid chain: Phosphoribosyl-ATP pyrophosphatase (111 aa).

The protein belongs to the PRA-PH family.

It is found in the cytoplasm. It carries out the reaction 1-(5-phospho-beta-D-ribosyl)-ATP + H2O = 1-(5-phospho-beta-D-ribosyl)-5'-AMP + diphosphate + H(+). It functions in the pathway amino-acid biosynthesis; L-histidine biosynthesis; L-histidine from 5-phospho-alpha-D-ribose 1-diphosphate: step 2/9. In Azotobacter vinelandii (strain DJ / ATCC BAA-1303), this protein is Phosphoribosyl-ATP pyrophosphatase.